A 417-amino-acid polypeptide reads, in one-letter code: MSLPFSLSVAARRIEALLGDLSRFPWKTTAQTLRERFRADHLGLTASSLTFTTILALVPFFTVALAVFTAFPIFGQLQDALQGWLVSSLVPDSIARQVLGYLTQFAAKASGLGLAGFSVLLVTALALILTIDRTLNDIWRVQRLRPLGQRVLIYWAAITLGPLLLGASLALTSYVMSASGGLVKRLPDGVRFLFDSLQFMVLAAGMALLYHYVPNTPVRWRHAWSGGLFVALCIELAKKALALYLGRVPTYSVVYGAFATLPILLVWIYMAWVIVLLGAVVTAYLPSLLAGVARRGTVAGWTFQLALEVLQQLHRVRHDAGKGLRAGQLAQLLRVDVLQLEPVLESLTALDWVGQVSAVVVAASDPPEPRYVLLADPQSTLLEPLVHKLLLERSESLGPLWDKAGLGRLQMADVLAR.

6 helical membrane passes run 54-74 (ILAL…FPIF), 111-131 (GLGL…ILTI), 151-171 (VLIY…SLAL), 192-212 (FLFD…LYHY), 226-246 (GGLF…LYLG), and 261-281 (LPIL…GAVV).

The protein belongs to the UPF0761 family.

The protein localises to the cell inner membrane. The protein is UPF0761 membrane protein Veis_3782 of Verminephrobacter eiseniae (strain EF01-2).